The sequence spans 246 residues: 3-deoxy-manno-octulosonate cytidylyltransferase (246 aa).

Belongs to the KdsB family.

It is found in the cytoplasm. The enzyme catalyses 3-deoxy-alpha-D-manno-oct-2-ulosonate + CTP = CMP-3-deoxy-beta-D-manno-octulosonate + diphosphate. It functions in the pathway nucleotide-sugar biosynthesis; CMP-3-deoxy-D-manno-octulosonate biosynthesis; CMP-3-deoxy-D-manno-octulosonate from 3-deoxy-D-manno-octulosonate and CTP: step 1/1. The protein operates within bacterial outer membrane biogenesis; lipopolysaccharide biosynthesis. Activates KDO (a required 8-carbon sugar) for incorporation into bacterial lipopolysaccharide in Gram-negative bacteria. In Leptospira biflexa serovar Patoc (strain Patoc 1 / Ames), this protein is 3-deoxy-manno-octulosonate cytidylyltransferase.